We begin with the raw amino-acid sequence, 152 residues long: SsrA-binding protein (152 aa).

It belongs to the SmpB family.

The protein resides in the cytoplasm. Functionally, required for rescue of stalled ribosomes mediated by trans-translation. Binds to transfer-messenger RNA (tmRNA), required for stable association of tmRNA with ribosomes. tmRNA and SmpB together mimic tRNA shape, replacing the anticodon stem-loop with SmpB. tmRNA is encoded by the ssrA gene; the 2 termini fold to resemble tRNA(Ala) and it encodes a 'tag peptide', a short internal open reading frame. During trans-translation Ala-aminoacylated tmRNA acts like a tRNA, entering the A-site of stalled ribosomes, displacing the stalled mRNA. The ribosome then switches to translate the ORF on the tmRNA; the nascent peptide is terminated with the 'tag peptide' encoded by the tmRNA and targeted for degradation. The ribosome is freed to recommence translation, which seems to be the essential function of trans-translation. The sequence is that of SsrA-binding protein from Rickettsia peacockii (strain Rustic).